The sequence spans 974 residues: MTIKTPGTPVSKMDRTPAVTPGGSSRSREEKIVVTVRLRPMNKRELLAKDQVAWECVNDHTIVSKPQVQERLHHQSSFTFDKVFGPESLTENVYEDGVKNVALSALMGINATIFAYGQTSSGKTYTMRGVTEKAVNDIYNHIIKTPERDFTIKISGLEIYNENVRDLLNSDSGRALKLLDDPEKGTVVEKLVEETANNDNHLRHLISICEAQRQVGETALNDTSSRSHQIIRLTIQSTHRENSDCVRSYMASLNFVDLAGSERASQSQADGTRLREGCHINLSLMTLTTVIRKLSVGKRSGHIPYRDSKLTRILQHSLGGNARTAIICTLSPALAHVEQSRNTLYFANRAKEVTNNAHVNMVVSDKQLVKHLQKEVARLEAERRTPGPSTEKDFKIQQMEMEIGELRRQRDDAQIQLEELRQKLQGDQQQNKGLNPFESPDPPVRKCLSYSVAVTPSSENKTLNRNERARKTTMRQSMIRQSSTAPFTLMHEIRKLEHLQEQLGEEATKALEVLQKEVACHRLGNQDAAQTIAKLQAEIREMRTVKPSAMLKEVGDVIAPNKSVSANLKEEITRLHSQGSTIANLEEQLESVQKSIDKLVMSLPSNISAGDETPKTKNHHHQSKKKKLLPLTPSSASNRQNFLKSPCSPLSASRQVLDCDAENKAPQENNSSAARGATTPQGSEKETPQKGEESGDVSSREGTPGYRRSSSVNMKKMQQMFQNAAEENVRSIRAYVTELKERVAKLQYQKQLLVCQVLELEANDGAGYSVENEENTIMEDEEQNQVAWHITFIEERQQIIELWHVCHVSIIHRTQFYLLFKGDQADQIYMEVELRRLTWLEQHLAEVGNATPARNCDESVVSLSSSIKALRREREFLAKRVNSRLTPEEREELYMKWDVPLEGKQRKLQFVNKLWTDPYDSRHVQESAEIVAKLVGFCESGNISKEMFELNFAVPSDKRQWNIGWDNISNLLHL.

The tract at residues 1-29 (MTIKTPGTPVSKMDRTPAVTPGGSSRSRE) is disordered. Residues 31–353 (KIVVTVRLRP…LYFANRAKEV (323 aa)) form the Kinesin motor domain. 117-124 (GQTSSGKT) lines the ATP pocket. Coiled-coil stretches lie at residues 362 to 435 (VVSD…KGLN) and 565 to 603 (SANLKEEITRLHSQGSTIANLEEQLESVQKSIDKLVMSL). Disordered stretches follow at residues 605–649 (SNIS…PCSP) and 663–713 (NKAP…SSVN). Residues 616–628 (TKNHHHQSKKKKL) are compositionally biased toward basic residues. 2 stretches are compositionally biased toward polar residues: residues 638 to 649 (NRQNFLKSPCSP) and 666 to 682 (PQENNSSAARGATTPQG). Residues 683 to 693 (SEKETPQKGEE) are compositionally biased toward basic and acidic residues.

It belongs to the TRAFAC class myosin-kinesin ATPase superfamily. Kinesin family. KIN-7 subfamily. In terms of processing, phosphorylated at Thr-145, Thr-687 and Thr-703 by CDKAs and CDKBs. Phosphorylated NACK1 fails to mediate cytokinesis. In terms of tissue distribution, expressed in roots, flowers, pollen mother cells and embryos.

The protein localises to the cytoplasm. Its subcellular location is the cytoskeleton. It localises to the phragmoplast. In terms of biological role, probable plus end-directed motor protein that functions in the NACK-PQR (ANP1-MKK6-MPK4) MAP kinase signaling pathway, which is essential for somatic cell cytokinesis, especially for the cell-plate formation and its expansion. Regulates the activity and the localization of ANP1, probably by association through the non-catalytic region of the kinase. Functionally redundant with NACK2 and essential to promote the progression of cytokinesis and for cellularization (formation of the cell plate) during microgametogenesis and megagametogenesis. The polypeptide is Kinesin-like protein KIN-7A (Arabidopsis thaliana (Mouse-ear cress)).